Here is a 114-residue protein sequence, read N- to C-terminus: Iron-sulfur cluster insertion protein ErpA (114 aa).

The iron-sulfur cluster site is built by C42, C106, and C108.

It belongs to the HesB/IscA family. In terms of assembly, homodimer. Iron-sulfur cluster serves as cofactor.

Required for insertion of 4Fe-4S clusters for at least IspG. The chain is Iron-sulfur cluster insertion protein ErpA from Klebsiella pneumoniae (strain 342).